The sequence spans 440 residues: L-seryl-tRNA(Sec) selenium transferase (440 aa).

K282 is subject to N6-(pyridoxal phosphate)lysine.

Belongs to the SelA family. Pyridoxal 5'-phosphate serves as cofactor.

The protein resides in the cytoplasm. The catalysed reaction is L-seryl-tRNA(Sec) + selenophosphate + H(+) = L-selenocysteinyl-tRNA(Sec) + phosphate. The protein operates within aminoacyl-tRNA biosynthesis; selenocysteinyl-tRNA(Sec) biosynthesis; selenocysteinyl-tRNA(Sec) from L-seryl-tRNA(Sec) (bacterial route): step 1/1. Its function is as follows. Converts seryl-tRNA(Sec) to selenocysteinyl-tRNA(Sec) required for selenoprotein biosynthesis. This Campylobacter jejuni (strain RM1221) protein is L-seryl-tRNA(Sec) selenium transferase.